Here is a 433-residue protein sequence, read N- to C-terminus: Glutamate-1-semialdehyde 2,1-aminomutase (433 aa).

An N6-(pyridoxal phosphate)lysine modification is found at lysine 273.

It belongs to the class-III pyridoxal-phosphate-dependent aminotransferase family. HemL subfamily. In terms of assembly, homodimer. Pyridoxal 5'-phosphate is required as a cofactor.

It localises to the cytoplasm. The enzyme catalyses (S)-4-amino-5-oxopentanoate = 5-aminolevulinate. The protein operates within porphyrin-containing compound metabolism; protoporphyrin-IX biosynthesis; 5-aminolevulinate from L-glutamyl-tRNA(Glu): step 2/2. It participates in porphyrin-containing compound metabolism; chlorophyll biosynthesis. This is Glutamate-1-semialdehyde 2,1-aminomutase (hemL) from Synechocystis sp. (strain ATCC 27184 / PCC 6803 / Kazusa).